The chain runs to 308 residues: Elongation factor Ts (308 aa).

The involved in Mg(2+) ion dislocation from EF-Tu stretch occupies residues T80–V83.

This sequence belongs to the EF-Ts family.

It localises to the cytoplasm. Functionally, associates with the EF-Tu.GDP complex and induces the exchange of GDP to GTP. It remains bound to the aminoacyl-tRNA.EF-Tu.GTP complex up to the GTP hydrolysis stage on the ribosome. The protein is Elongation factor Ts of Rhodopseudomonas palustris (strain BisB5).